A 479-amino-acid polypeptide reads, in one-letter code: Aspartyl/glutamyl-tRNA(Asn/Gln) amidotransferase subunit B (479 aa).

Belongs to the GatB/GatE family. GatB subfamily. In terms of assembly, heterotrimer of A, B and C subunits.

It carries out the reaction L-glutamyl-tRNA(Gln) + L-glutamine + ATP + H2O = L-glutaminyl-tRNA(Gln) + L-glutamate + ADP + phosphate + H(+). The enzyme catalyses L-aspartyl-tRNA(Asn) + L-glutamine + ATP + H2O = L-asparaginyl-tRNA(Asn) + L-glutamate + ADP + phosphate + 2 H(+). Its function is as follows. Allows the formation of correctly charged Asn-tRNA(Asn) or Gln-tRNA(Gln) through the transamidation of misacylated Asp-tRNA(Asn) or Glu-tRNA(Gln) in organisms which lack either or both of asparaginyl-tRNA or glutaminyl-tRNA synthetases. The reaction takes place in the presence of glutamine and ATP through an activated phospho-Asp-tRNA(Asn) or phospho-Glu-tRNA(Gln). The protein is Aspartyl/glutamyl-tRNA(Asn/Gln) amidotransferase subunit B of Streptococcus pyogenes serotype M6 (strain ATCC BAA-946 / MGAS10394).